The primary structure comprises 709 residues: Cell adhesion molecule CEACAM3 (709 aa).

Positions 1 to 34 (MELSSVLPCKRCTPWRGLLLTASLLTCWLLPTTA) are cleaved as a signal peptide. 5 Ig-like V-type domains span residues 35–142 (QVSI…HVYF), 155–262 (QLSI…QVDT), 275–382 (QLTV…QVNT), 393–500 (LLTI…SVHT), and 509–616 (QLVI…HIYK). 16 N-linked (GlcNAc...) asparagine glycosylation sites follow: N73, N86, N103, N110, N133, N207, N224, N231, N327, N344, N351, N381, N462, N561, N578, and N585. One can recognise an Ig-like C2-type domain in the interval 631 to 695 (RVKSSVVLTC…YRCEVSNPVS (65 aa)).

It belongs to the immunoglobulin superfamily. CEA family. Expression detected only in placenta.

Its function is as follows. Possibly involved in cell adhesion. This chain is Cell adhesion molecule CEACAM3, found in Rattus norvegicus (Rat).